The primary structure comprises 879 residues: Alanine--tRNA ligase (879 aa).

Zn(2+) is bound by residues H567, H571, C669, and H673.

This sequence belongs to the class-II aminoacyl-tRNA synthetase family. Requires Zn(2+) as cofactor.

It localises to the cytoplasm. The catalysed reaction is tRNA(Ala) + L-alanine + ATP = L-alanyl-tRNA(Ala) + AMP + diphosphate. Functionally, catalyzes the attachment of alanine to tRNA(Ala) in a two-step reaction: alanine is first activated by ATP to form Ala-AMP and then transferred to the acceptor end of tRNA(Ala). Also edits incorrectly charged Ser-tRNA(Ala) and Gly-tRNA(Ala) via its editing domain. The polypeptide is Alanine--tRNA ligase (Lactobacillus acidophilus (strain ATCC 700396 / NCK56 / N2 / NCFM)).